The primary structure comprises 464 residues: GDNF family receptor alpha-2 (464 aa).

Residues 1-21 form the signal peptide; the sequence is MILANVFCLFFFLDETLRSLA. 14 cysteine pairs are disulfide-bonded: Cys-40/Cys-93, Cys-47/Cys-53, Cys-63/Cys-78, Cys-95/Cys-105, Cys-161/Cys-222, Cys-168/Cys-174, Cys-185/Cys-200, Cys-195/Cys-241, Cys-224/Cys-229, Cys-251/Cys-323, Cys-258/Cys-264, Cys-275/Cys-293, Cys-285/Cys-347, and Cys-325/Cys-335. A glycan (N-linked (GlcNAc...) asparagine) is linked at Asn-52. N-linked (GlcNAc...) asparagine glycosylation is found at Asn-357 and Asn-413. Ser-444 carries the GPI-anchor amidated serine lipid modification. The propeptide at 445-464 is removed in mature form; the sequence is RARPSAALTVLSVLMLKLAL.

It belongs to the GDNFR family. Interacts with NRTN ligand and RET: forms a 2:2:2 ternary complex composed of NRTN ligand, GFRA2 and RET receptor. Also forms a 4:4:4 tetrameric complex composed of 4 copies of NRTN ligand, GFRA2 and RET receptor, which prevents endocytosis of RET. Interacts with SORL1.

It localises to the cell membrane. In terms of biological role, receptor for neurturin (NRTN), a growth factor that supports the survival of sympathetic neurons. NRTN-binding leads to autophosphorylation and activation of the RET receptor. Also able to mediate GDNF signaling through the RET tyrosine kinase receptor. The chain is GDNF family receptor alpha-2 (GFRA2) from Pongo abelii (Sumatran orangutan).